The sequence spans 107 residues: U1-lycotoxin-Ls1o (107 aa).

The N-terminal stretch at 1 to 20 (MMKVLVVVALLVTLISYSSS) is a signal peptide. A propeptide spanning residues 21–41 (EGIDDLEADELLSLMANEQTR) is cleaved from the precursor. Intrachain disulfides connect cysteine 44/cysteine 59, cysteine 51/cysteine 68, cysteine 58/cysteine 86, and cysteine 70/cysteine 84.

This sequence belongs to the neurotoxin 19 (CSTX) family. 04 (U1-Lctx) subfamily. Expressed by the venom gland.

It is found in the secreted. This is U1-lycotoxin-Ls1o from Lycosa singoriensis (Wolf spider).